Here is a 109-residue protein sequence, read N- to C-terminus: Cell division suppressor protein YneA (109 aa).

The LysM domain occupies 40 to 94; the sequence is STVTITKGDTLWELSNKYHNHHHLTTNEFVKWVEDVNDLNSDTAQSLSPGDKLYI.

Belongs to the YneA family.

Its subcellular location is the cytoplasm. Functionally, inhibits cell division during the SOS response. Affects a later stage of the cell division protein assembly, after the assembly of the Z ring, by probably suppressing recruitment of FtsL and/or DivIC to the division machinery. The chain is Cell division suppressor protein YneA from Priestia megaterium (strain DSM 319 / IMG 1521) (Bacillus megaterium).